We begin with the raw amino-acid sequence, 276 residues long: MTTKELFDRICRKRSFLCVGLDTDVKKIPPHLLNEDDPILAFNKAIIDATAEYCVAFKPNMAFYESMGSFGAHSFEKTIEYIRERYPDQFIIADAKRGDIGNTSDMYARSFFEHLKVDALTVSPYMGEDSISPFLSYAGKFTVLLALTSNKGSQDFQMMRDADGEYLFERVIRISQTWDNAGQLMYVVGATQASMLKDIREIVPDAFLLVPGVGAQGGSLEDVAEYGMNAHCGLLVNASRSIIYADNTEGFAAKAAGEAAAMQRQMEIALRAKGLI.

The Proton donor role is filled by lysine 96.

This sequence belongs to the OMP decarboxylase family. Type 2 subfamily.

The enzyme catalyses orotidine 5'-phosphate + H(+) = UMP + CO2. It functions in the pathway pyrimidine metabolism; UMP biosynthesis via de novo pathway; UMP from orotate: step 2/2. In Porphyromonas gingivalis (strain ATCC 33277 / DSM 20709 / CIP 103683 / JCM 12257 / NCTC 11834 / 2561), this protein is Orotidine 5'-phosphate decarboxylase.